The following is a 102-amino-acid chain: NADH-quinone oxidoreductase subunit K (102 aa).

A run of 3 helical transmembrane segments spans residues 6–26 (ATHFLLLSAALFIIGMVGVLT), 31–51 (LVIFMCIELMLNAVNVSLIGF), and 62–82 (VFALFVIAIAAAEAVVGLGIV).

This sequence belongs to the complex I subunit 4L family. In terms of assembly, NDH-1 is composed of 14 different subunits. Subunits NuoA, H, J, K, L, M, N constitute the membrane sector of the complex.

Its subcellular location is the cell membrane. It carries out the reaction a quinone + NADH + 5 H(+)(in) = a quinol + NAD(+) + 4 H(+)(out). In terms of biological role, NDH-1 shuttles electrons from NADH, via FMN and iron-sulfur (Fe-S) centers, to quinones in the respiratory chain. The immediate electron acceptor for the enzyme in this species is believed to be ubiquinone. Couples the redox reaction to proton translocation (for every two electrons transferred, four hydrogen ions are translocated across the cytoplasmic membrane), and thus conserves the redox energy in a proton gradient. This chain is NADH-quinone oxidoreductase subunit K, found in Thermomicrobium roseum (strain ATCC 27502 / DSM 5159 / P-2).